A 355-amino-acid polypeptide reads, in one-letter code: Inner membrane protein YghQ (355 aa).

Residues 1 to 37 (MAGFNIKHWFADGAFRTIIRNSAWLGSSNVVSALLGL) lie on the Periplasmic side of the membrane. Residues 38 to 58 (LALSCAGKGMTPAMFGVLVIV) form a helical membrane-spanning segment. Residues 59-100 (QSYAKSISDFIKFQTWQLVVQYGTPALTNNNPQQFRNVVSFS) are Cytoplasmic-facing. A helical transmembrane segment spans residues 101-121 (FSLDIVSGAVAIVGGIALLPF). At 122 to 134 (LSHSLGLDDQSFW) the chain is on the periplasmic side. A helical membrane pass occupies residues 135-155 (LAALYCTLIPSMASSTPTGIL). Over 156-177 (RAVDRFDLIAVQQATKPFLRAA) the chain is Cytoplasmic. Residues 178-198 (GSVVAWYFDFGFAGFVIAWYV) traverse the membrane as a helical segment. The Periplasmic segment spans residues 199-261 (SNLVGGTMYW…WSARNSCSTV (63 aa)). A helical membrane pass occupies residues 262-282 (LVGIVLGPAAAGLFKIAMTFF). The Cytoplasmic segment spans residues 283 to 323 (DAAGTPAGLLGKSFYPEVMRLDPRTTRPWLLGVKSGLLAGG). A helical membrane pass occupies residues 324 to 344 (IGILVALAVLIVGKPLISLVF). Topologically, residues 345-355 (GVKYLEAYDLI) are periplasmic.

The protein localises to the cell inner membrane. This is Inner membrane protein YghQ (yghQ) from Escherichia coli (strain K12).